Here is a 373-residue protein sequence, read N- to C-terminus: Queuine tRNA-ribosyltransferase (373 aa).

The active-site Proton acceptor is the Asp94. Residues Asp94–Phe98, Asp148, Gln191, and Gly218 contribute to the substrate site. The segment at Gly249–Tyr255 is RNA binding. Asp268 (nucleophile) is an active-site residue. Residues Thr273–Arg277 are RNA binding; important for wobble base 34 recognition. 4 residues coordinate Zn(2+): Cys306, Cys308, Cys311, and His337.

This sequence belongs to the queuine tRNA-ribosyltransferase family. Homodimer. Within each dimer, one monomer is responsible for RNA recognition and catalysis, while the other monomer binds to the replacement base PreQ1. Requires Zn(2+) as cofactor.

The enzyme catalyses 7-aminomethyl-7-carbaguanine + guanosine(34) in tRNA = 7-aminomethyl-7-carbaguanosine(34) in tRNA + guanine. It participates in tRNA modification; tRNA-queuosine biosynthesis. Its function is as follows. Catalyzes the base-exchange of a guanine (G) residue with the queuine precursor 7-aminomethyl-7-deazaguanine (PreQ1) at position 34 (anticodon wobble position) in tRNAs with GU(N) anticodons (tRNA-Asp, -Asn, -His and -Tyr). Catalysis occurs through a double-displacement mechanism. The nucleophile active site attacks the C1' of nucleotide 34 to detach the guanine base from the RNA, forming a covalent enzyme-RNA intermediate. The proton acceptor active site deprotonates the incoming PreQ1, allowing a nucleophilic attack on the C1' of the ribose to form the product. After dissociation, two additional enzymatic reactions on the tRNA convert PreQ1 to queuine (Q), resulting in the hypermodified nucleoside queuosine (7-(((4,5-cis-dihydroxy-2-cyclopenten-1-yl)amino)methyl)-7-deazaguanosine). In Ruminiclostridium cellulolyticum (strain ATCC 35319 / DSM 5812 / JCM 6584 / H10) (Clostridium cellulolyticum), this protein is Queuine tRNA-ribosyltransferase.